We begin with the raw amino-acid sequence, 323 residues long: Dolichyl-phosphate beta-glucosyltransferase ALG5A (323 aa).

Topologically, residues 1 to 5 are lumenal; that stretch reads MKFWR. Residues 6 to 26 form a helical membrane-spanning segment; that stretch reads FVQILFFLGVAAVGLVVAVMI. Over 27–323 the chain is Cytoplasmic; sequence ANADDTTLFD…GAWKIRDRRH (297 aa).

The protein belongs to the glycosyltransferase 2 family.

Its subcellular location is the endoplasmic reticulum membrane. It carries out the reaction a di-trans,poly-cis-dolichyl phosphate + UDP-alpha-D-glucose = a di-trans,poly-cis-dolichyl beta-D-glucosyl phosphate + UDP. The protein operates within protein modification; protein glycosylation. Functionally, dolichyl-phosphate beta-glucosyltransferase involved in the glycosylation of glycoproteins through the synthesis of dolichyl beta-D-glucosyl phosphate which serves as a sugar donor for transfer of three glucose residues to the Man-9-GlcNAc-2-PP-dolichol precursor to N-glycans. The polypeptide is Dolichyl-phosphate beta-glucosyltransferase ALG5A (Trichomonas vaginalis (strain ATCC PRA-98 / G3)).